Reading from the N-terminus, the 571-residue chain is 2-succinyl-5-enolpyruvyl-6-hydroxy-3-cyclohexene-1-carboxylate synthase (571 aa).

It belongs to the TPP enzyme family. MenD subfamily. In terms of assembly, homodimer. The cofactor is Mg(2+). Mn(2+) is required as a cofactor. Thiamine diphosphate serves as cofactor.

It carries out the reaction isochorismate + 2-oxoglutarate + H(+) = 5-enolpyruvoyl-6-hydroxy-2-succinyl-cyclohex-3-ene-1-carboxylate + CO2. It functions in the pathway quinol/quinone metabolism; 1,4-dihydroxy-2-naphthoate biosynthesis; 1,4-dihydroxy-2-naphthoate from chorismate: step 2/7. Its pathway is quinol/quinone metabolism; menaquinone biosynthesis. In terms of biological role, catalyzes the thiamine diphosphate-dependent decarboxylation of 2-oxoglutarate and the subsequent addition of the resulting succinic semialdehyde-thiamine pyrophosphate anion to isochorismate to yield 2-succinyl-5-enolpyruvyl-6-hydroxy-3-cyclohexene-1-carboxylate (SEPHCHC). The polypeptide is 2-succinyl-5-enolpyruvyl-6-hydroxy-3-cyclohexene-1-carboxylate synthase (Lysinibacillus sphaericus (strain C3-41)).